A 697-amino-acid chain; its full sequence is Elongation factor G 2 (697 aa).

Residues 5 to 280 (SLYRNIGIFA…AVVDYLPSPT (276 aa)) enclose the tr-type G domain. GTP-binding positions include 14-21 (AHVDAGKT), 78-82 (DTPGH), and 132-135 (NKLD).

This sequence belongs to the TRAFAC class translation factor GTPase superfamily. Classic translation factor GTPase family. EF-G/EF-2 subfamily.

It localises to the cytoplasm. In terms of biological role, catalyzes the GTP-dependent ribosomal translocation step during translation elongation. During this step, the ribosome changes from the pre-translocational (PRE) to the post-translocational (POST) state as the newly formed A-site-bound peptidyl-tRNA and P-site-bound deacylated tRNA move to the P and E sites, respectively. Catalyzes the coordinated movement of the two tRNA molecules, the mRNA and conformational changes in the ribosome. The polypeptide is Elongation factor G 2 (Saccharophagus degradans (strain 2-40 / ATCC 43961 / DSM 17024)).